Consider the following 268-residue polypeptide: Tryptophan synthase alpha chain (268 aa).

Catalysis depends on proton acceptor residues Glu49 and Asp60.

This sequence belongs to the TrpA family. Tetramer of two alpha and two beta chains.

It catalyses the reaction (1S,2R)-1-C-(indol-3-yl)glycerol 3-phosphate + L-serine = D-glyceraldehyde 3-phosphate + L-tryptophan + H2O. The protein operates within amino-acid biosynthesis; L-tryptophan biosynthesis; L-tryptophan from chorismate: step 5/5. In terms of biological role, the alpha subunit is responsible for the aldol cleavage of indoleglycerol phosphate to indole and glyceraldehyde 3-phosphate. The polypeptide is Tryptophan synthase alpha chain (Photorhabdus laumondii subsp. laumondii (strain DSM 15139 / CIP 105565 / TT01) (Photorhabdus luminescens subsp. laumondii)).